The following is a 1043-amino-acid chain: Integrator complex subunit 3 (1043 aa).

Met1 carries the N-acetylmethionine modification. Phosphoserine is present on residues Ser502, Ser537, and Ser995. The segment at 977–1043 is disordered; it reads YEDSSTKPPK…GSSAVGSDSD (67 aa). Over residues 1008–1022 the composition is skewed to acidic residues; that stretch reads AEEESGSSSASEEED.

The protein belongs to the Integrator subunit 3 family. Component of the Integrator complex, composed of core subunits INTS1, INTS2, INTS3, INTS4, INTS5, INTS6, INTS7, INTS8, INTS9/RC74, INTS10, INTS11/CPSF3L, INTS12, INTS13, INTS14 and INTS15. The core complex associates with protein phosphatase 2A subunits PPP2CA and PPP2R1A, to form the Integrator-PP2A (INTAC) complex. Component of the SOSS complex, composed of SOSS-B (SOSS-B1/NABP2 or SOSS-B2/NABP1), SOSS-A/INTS3 and SOSS-C/INIP. SOSS complexes containing SOSS-B1/NABP2 are more abundant than complexes containing SOSS-B2/NABP1. Interacts with SOSS-B1/NABP2, SOSS-B2/NABP1 and SOSS-C/INIP; the interaction is direct. Interacts with NBN/NBS1.

Its subcellular location is the nucleus. The protein resides in the cytoplasm. Its function is as follows. Component of the integrator complex, a multiprotein complex that terminates RNA polymerase II (Pol II) transcription in the promoter-proximal region of genes. The integrator complex provides a quality checkpoint during transcription elongation by driving premature transcription termination of transcripts that are unfavorably configured for transcriptional elongation: the complex terminates transcription by (1) catalyzing dephosphorylation of the C-terminal domain (CTD) of Pol II subunit POLR2A/RPB1 and SUPT5H/SPT5, (2) degrading the exiting nascent RNA transcript via endonuclease activity and (3) promoting the release of Pol II from bound DNA. The integrator complex is also involved in terminating the synthesis of non-coding Pol II transcripts, such as enhancer RNAs (eRNAs), small nuclear RNAs (snRNAs), telomerase RNAs and long non-coding RNAs (lncRNAs). Within the integrator complex, INTS3 is involved in the post-termination step: INTS3 binds INTS7 in the open conformation of integrator complex and prevents the rebinding of Pol II to the integrator after termination cycle. Mediates recruitment of cytoplasmic dynein to the nuclear envelope, probably as component of the integrator complex. In terms of biological role, component of the SOSS complex, a multiprotein complex that functions downstream of the MRN complex to promote DNA repair and G2/M checkpoint. The SOSS complex associates with single-stranded DNA at DNA lesions and influences diverse endpoints in the cellular DNA damage response including cell-cycle checkpoint activation, recombinational repair and maintenance of genomic stability. The SOSS complex is required for efficient homologous recombination-dependent repair of double-strand breaks (DSBs) and ATM-dependent signaling pathways. In the SOSS complex, it is required for the assembly of the complex and for stabilization of the complex at DNA damage sites. The polypeptide is Integrator complex subunit 3 (INTS3) (Pongo abelii (Sumatran orangutan)).